A 635-amino-acid polypeptide reads, in one-letter code: Biosynthetic arginine decarboxylase (635 aa).

Lysine 100 carries the post-translational modification N6-(pyridoxal phosphate)lysine. 282 to 292 is a binding site for substrate; it reads LDIGGGLGVDY.

Belongs to the Orn/Lys/Arg decarboxylase class-II family. SpeA subfamily. It depends on Mg(2+) as a cofactor. Requires pyridoxal 5'-phosphate as cofactor.

The enzyme catalyses L-arginine + H(+) = agmatine + CO2. Its pathway is amine and polyamine biosynthesis; agmatine biosynthesis; agmatine from L-arginine: step 1/1. Catalyzes the biosynthesis of agmatine from arginine. The protein is Biosynthetic arginine decarboxylase of Geotalea uraniireducens (strain Rf4) (Geobacter uraniireducens).